A 484-amino-acid polypeptide reads, in one-letter code: UDP-N-acetylmuramoyl-L-alanyl-D-glutamate--L-lysine ligase (484 aa).

Position 43 (Ser-43) interacts with UDP-N-acetyl-alpha-D-muramoyl-L-alanyl-D-glutamate. 119–125 contacts ATP; that stretch reads GTKGKTT. Residues 161 to 162, Ser-188, and Arg-196 contribute to the UDP-N-acetyl-alpha-D-muramoyl-L-alanyl-D-glutamate site; that span reads TT. Lys-230 is modified (N6-carboxylysine). The L-lysine recognition motif signature appears at 405–408; that stretch reads DDPN.

The protein belongs to the MurCDEF family. MurE subfamily. Post-translationally, carboxylation is probably crucial for Mg(2+) binding and, consequently, for the gamma-phosphate positioning of ATP.

It is found in the cytoplasm. The catalysed reaction is UDP-N-acetyl-alpha-D-muramoyl-L-alanyl-D-glutamate + L-lysine + ATP = UDP-N-acetyl-alpha-D-muramoyl-L-alanyl-gamma-D-glutamyl-L-lysine + ADP + phosphate + H(+). It functions in the pathway cell wall biogenesis; peptidoglycan biosynthesis. Catalyzes the addition of L-lysine to the nucleotide precursor UDP-N-acetylmuramoyl-L-alanyl-D-glutamate (UMAG) in the biosynthesis of bacterial cell-wall peptidoglycan. In Streptococcus agalactiae serotype Ia (strain ATCC 27591 / A909 / CDC SS700), this protein is UDP-N-acetylmuramoyl-L-alanyl-D-glutamate--L-lysine ligase.